The following is a 122-amino-acid chain: Head fiber dimeric protein (122 aa).

Homodimer. Interacts with the major capsid protein.

It is found in the virion. Forms short fibers at the surface of the viral capsid. The protein is Head fiber dimeric protein of Bacteroides intestinalis (Bacteroides phage PhiCrAss001).